The following is a 167-amino-acid chain: MAVADDIALIRKQEEVLVFPAFDEAVAFKIGSAIRARAIAENLPIIVDIRLWDRPLFYAAMPGSNASNPDWARRKINVVRRFLRSTYRMVLEQQRPDRAFKIGEGLDVSDYVLAGGGFPVTVKGAGVIGVIAVSGLPEREDHGVVIDALCDHLGIDKRGLVLASEAE.

This sequence belongs to the UPF0303 family.

This Mesorhizobium japonicum (strain LMG 29417 / CECT 9101 / MAFF 303099) (Mesorhizobium loti (strain MAFF 303099)) protein is UPF0303 protein mlr5144.